A 240-amino-acid polypeptide reads, in one-letter code: Transmembrane emp24 domain-containing protein 6 (240 aa).

The first 21 residues, 1-21, serve as a signal peptide directing secretion; it reads MSPLLFGAGLVVLNLVTSARS. Over 22-200 the chain is Lumenal; sequence QKTEPLSGSG…FFLIQSNYNY (179 aa). Residues 53–138 enclose the GOLD domain; sequence TECFWQFAHQ…SVQVYLNFGV (86 aa). N-linked (GlcNAc...) asparagine glycosylation is found at Asn-107 and Asn-156. The chain crosses the membrane as a helical span at residues 201 to 223; the sequence is VNWWSTAQSLVIILSGILQLYFL. The Cytoplasmic portion of the chain corresponds to 224-240; sequence KRLFNVPTTTDTKKPRC.

Belongs to the EMP24/GP25L family.

It is found in the endoplasmic reticulum membrane. This chain is Transmembrane emp24 domain-containing protein 6 (TMED6), found in Homo sapiens (Human).